Here is a 538-residue protein sequence, read N- to C-terminus: Importin subunit alpha-6 (538 aa).

An IBB domain is found at 1 to 58; sequence MSYKPSAKTEVRRNRYKVSVDADEGRRRREDNMVEIRKNKREENLQKKRREGFNPSMA. Residues 1–69 are disordered; the sequence is MSYKPSAKTE…QPGQDFSSSL (69 aa). Positions 7–46 are enriched in basic and acidic residues; that stretch reads AKTEVRRNRYKVSVDADEGRRRREDNMVEIRKNKREENLQ. Polar residues predominate over residues 56-69; the sequence is SMASQPGQDFSSSL. ARM repeat units lie at residues 109–149, 152–191, 194–234, 236–275, 278–317, 320–360, 363–402, and 406–445; these read NPPI…NIAS, SENTRVIIDSGAVPLFVKLLSSASEEVREQAVWALGNVAG, PKCR…NFCR, KPQPAFEQTKAALPALERLLHSTDEEVLTDASWALSYLSD, NEKIQTVIDAGVIPRLVQLLAHPSPSVLIPALRTIGNIVT, DIQT…NITA, TSQIQEVFQAGIIRPLINLLEIGEFEIKKEAVWAISNATS, and HDQIKFLVSQGCIRPLCDLLPCPDPRVVTVTLEGLENILK.

It belongs to the importin alpha family. In terms of assembly, forms a complex with importin subunit beta-1.

It is found in the nucleus envelope. Its function is as follows. Binds to conventional NLS motifs and mediates nuclear protein import across the nuclear envelope. Acts as a cellular receptor for the nuclear import of the virD2 protein of Agrobacterium, but is not essential for Agrobacterium-mediated root transformation. The sequence is that of Importin subunit alpha-6 from Arabidopsis thaliana (Mouse-ear cress).